A 622-amino-acid polypeptide reads, in one-letter code: Sodium-coupled monocarboxylate transporter 1 (622 aa).

Residues 1-15 are Extracellular-facing; the sequence is MVTPGNIGSFTVWDY. A helical transmembrane segment spans residues 16–36; sequence LVFALMLLISAVIGIYYAFAG. Residues 37–51 are Cytoplasmic-facing; that stretch reads GGQKTSKDFLMGGRS. The chain crosses the membrane as a helical span at residues 52–72; sequence MTAVPVALSLTASFMSAVTVL. Topologically, residues 73 to 83 are extracellular; it reads GTPAEVYRFGA. A helical transmembrane segment spans residues 84-104; it reads MFIIFAFSYTIVVIISSEVFL. Residues 105-128 lie on the Cytoplasmic side of the membrane; it reads PVFYRLGITSTYEYLELRFNKFVR. Residues 129–149 traverse the membrane as a helical segment; the sequence is LLGTILFIIQTVLYTGIVIYA. Residues 150 to 161 are Extracellular-facing; it reads PALALNQVTGFD. The helical transmembrane segment at 162-182 threads the bilayer; sequence LWGAVVATGVVCTFYCTMGGL. Over 183–184 the chain is Cytoplasmic; the sequence is KA. The helical transmembrane segment at 185–205 threads the bilayer; the sequence is VVWTDVFQVGIMVAGFTSVII. Topologically, residues 206–241 are extracellular; that stretch reads RAVVVQGGIGPILNDSYYGDRLNFWDFDPNPLKRHT. N-linked (GlcNAc...) asparagine glycosylation occurs at N219. A helical transmembrane segment spans residues 242–262; that stretch reads FWTIVVGGTFTWTGIYGVNQA. Topologically, residues 263 to 283 are cytoplasmic; sequence QVQRYIACKTRFQAKMSLYVN. The helical transmembrane segment at 284–304 threads the bilayer; that stretch reads LIGLWAILACAVLSGLAMYSI. The Extracellular portion of the chain corresponds to 305–336; it reads YKDCDPWTAKFVSAPDQLMPYLALDILRDYPG. The chain crosses the membrane as a helical span at residues 337–357; that stretch reads LPGLFVSCAYSGTLSTVSSSI. Over 358 to 389 the chain is Cytoplasmic; the sequence is NALAAVTVEDLIKPYIRSLSEKKMSWISKGTS. The helical transmembrane segment at 390–410 threads the bilayer; it reads LLYGAICIGMAGIASLMGGLL. Residues 411-415 are Extracellular-facing; that stretch reads QAALS. Residues 416-436 traverse the membrane as a helical segment; it reads IFGMVGGPLLGLFSLGILFPF. Residues 437–438 lie on the Cytoplasmic side of the membrane; the sequence is VN. Residues 439 to 459 traverse the membrane as a helical segment; sequence SLGAVIGLLSGFAISLWVGIG. Residues 460 to 521 lie on the Extracellular side of the membrane; sequence SQIYAPSPSS…LADSWYSLSY (62 aa). N481 and N488 each carry an N-linked (GlcNAc...) asparagine glycan. The helical transmembrane segment at 522-542 threads the bilayer; it reads LYFSTIGTIVAVLVGVIVSLL. The Cytoplasmic segment spans residues 543-622; it reads SGGLKQNVNR…KGEKTNGITA (80 aa). A disordered region spans residues 591 to 622; that stretch reads DNDMEQGTDNPAFNNMEMTSTEKGEKTNGITA. A compositionally biased stretch (polar residues) spans 595-609; sequence EQGTDNPAFNNMEMT.

Belongs to the sodium:solute symporter (SSF) (TC 2.A.21) family. As to expression, in the gastrula and neurula stages, expressed in the gastrula anterior endoderm and in the entire circumference of the blastopore lip superficial endoderm. At tailbud stages, abundant expression observed in the ventral midgut region. As development proceeds expression becomes restricted to the liver diverticulum and ultimately to the presumptive gallbladder, by tadpole stage 35. Also present in pronephros and the tip of the tail.

Its subcellular location is the apical cell membrane. It carries out the reaction (S)-lactate(out) + 2 Na(+)(out) = (S)-lactate(in) + 2 Na(+)(in). The enzyme catalyses propanoate(out) + 2 Na(+)(out) = propanoate(in) + 2 Na(+)(in). It catalyses the reaction pyruvate(out) + 2 Na(+)(out) = pyruvate(in) + 2 Na(+)(in). The catalysed reaction is acetate(out) + 2 Na(+)(out) = acetate(in) + 2 Na(+)(in). It carries out the reaction butanoate(out) + 2 Na(+)(out) = butanoate(in) + 2 Na(+)(in). The enzyme catalyses nicotinate(out) + 2 Na(+)(out) = nicotinate(in) + 2 Na(+)(in). It catalyses the reaction (R)-3-hydroxybutanoate(out) + 2 Na(+)(out) = (R)-3-hydroxybutanoate(in) + 2 Na(+)(in). The catalysed reaction is acetoacetate(out) + 2 Na(+)(out) = acetoacetate(in) + 2 Na(+)(in). It carries out the reaction 4-methyl-2-oxopentanoate(out) + 2 Na(+)(out) = 4-methyl-2-oxopentanoate(in) + 2 Na(+)(in). The enzyme catalyses 5-oxo-L-proline(out) + 2 Na(+)(out) = 5-oxo-L-proline(in) + 2 Na(+)(in). It catalyses the reaction iodide(out) = iodide(in). The catalysed reaction is chloride(in) = chloride(out). It carries out the reaction nitrate(in) = nitrate(out). The enzyme catalyses bromide(in) = bromide(out). Functionally, acts as an electrogenic sodium (Na(+)) and chloride (Cl-)-dependent sodium-coupled solute transporter, including transport of monocarboxylates (short-chain fatty acids including L-lactate, D-lactate, pyruvate, acetate, propionate, valerate and butyrate), mocarboxylate drugs (nicotinate, benzoate, salicylate and 5-aminosalicylate) and ketone bodies (beta-D-hydroxybutyrate, acetoacetate and alpha-ketoisocaproate), with a Na(+):substrate stoichiometry of between 4:1 and 2:1. Catalyzes passive carrier mediated diffusion of iodide. Mediates iodide transport from the thyrocyte into the colloid lumen through the apical membrane. Mediates sodium-coupled electrogenic transport of pyroglutamate (5-oxo-L-proline). Can mediate the transport of chloride, bromide, iodide and nitrate ions when external concentration of sodium ions is reduced. In Xenopus laevis (African clawed frog), this protein is Sodium-coupled monocarboxylate transporter 1.